A 328-amino-acid polypeptide reads, in one-letter code: Carbonic anhydrase-related protein 10 (328 aa).

In terms of domain architecture, Alpha-carbonic anhydrase spans 31–301 (GWWAYKEVVQ…LNNRCIRTNI (271 aa)).

Belongs to the alpha-carbonic anhydrase family.

Does not have a catalytic activity. The sequence is that of Carbonic anhydrase-related protein 10 (CA10) from Macaca fascicularis (Crab-eating macaque).